The sequence spans 401 residues: Calcium-responsive transcription coactivator (401 aa).

The N-terminal auto-inhibitory domain; necessary for interaction with SMARCA4/BRG1 stretch occupies residues 1–148 (MSVAFASARP…TLPTTSMSMS (148 aa)). The short motif at 50 to 53 (YQQI) is the SH2-binding element. Disordered regions lie at residues 72–171 (QSLL…VPMQ) and 214–401 (TRAR…NYQQ). The span at 85-106 (LGPGALSQSGSSQGLHPQGSLS) shows a compositional bias: low complexity. The span at 128 to 137 (NHVSMQQTAQ) shows a compositional bias: polar residues. A compositionally biased stretch (low complexity) spans 138-149 (STLPTTSMSMSG). The methionine-rich intra-molecular domain stretch occupies residues 149 to 237 (GSGHGTGPGY…GGSMMGQRPM (89 aa)). An MFD domain region spans residues 251-322 (YLGQEEYYSE…SQYSQQQAGY (72 aa)). 2 stretches are compositionally biased toward polar residues: residues 260–276 (EQYS…SQQY) and 285–294 (AYQQSSYTEQ). Over residues 295–304 (SYDRSFEDPT) the composition is skewed to basic and acidic residues. Residues 310–374 (GGNSQYSQQQ…QGQGQQYGSY (65 aa)) show a composition bias toward low complexity. The tract at residues 339–401 (NQQSYPGQQQ…EQGQYGNYQQ (63 aa)) is necessary for nuclear localization. The short motif at 358-361 (SQYS) is the SH2-binding element. Over residues 375–387 (RTSQTGPSAQQQR) the composition is skewed to polar residues. The SH3-binding signature appears at 376–384 (TSQTGPSAQ). A compositionally biased stretch (low complexity) spans 389 to 401 (YGYEQGQYGNYQQ). The tract at residues 392–401 (EQGQYGNYQQ) is necessary for interaction with CREBBP and for the recruitment of CREBBP to the nuclear bodies. Residues 396-399 (YGNY) carry the SH2-binding motif.

The protein belongs to the SS18 family. Homodimer. Dimerization may be necessary for its function in neuronal dendritic development. Interacts (via C-terminus) with CREBBP (via N-terminus), EP300 and SMARCA4/BRG1. Interacts with the nBAF complex. Association with CREBBP facilitates transcription while the association with SMARCA4/BRG1 suppresses CREST-mediated transcription in resting neurons. In terms of tissue distribution, brain (at protein level). Also found in the heart, liver, kidney and testis.

It localises to the nucleus. The protein localises to the chromosome. Its subcellular location is the centromere. It is found in the kinetochore. Transcriptional activator which is required for calcium-dependent dendritic growth and branching in cortical neurons. Recruits CREB-binding protein (CREBBP) to nuclear bodies. Component of the CREST-BRG1 complex, a multiprotein complex that regulates promoter activation by orchestrating a calcium-dependent release of a repressor complex and a recruitment of an activator complex. In resting neurons, transcription of the c-FOS promoter is inhibited by BRG1-dependent recruitment of a phospho-RB1-HDAC1 repressor complex. Upon calcium influx, RB1 is dephosphorylated by calcineurin, which leads to release of the repressor complex. At the same time, there is increased recruitment of CREBBP to the promoter by a CREST-dependent mechanism, which leads to transcriptional activation. The CREST-BRG1 complex also binds to the NR2B promoter, and activity-dependent induction of NR2B expression involves a release of HDAC1 and recruitment of CREBBP. The chain is Calcium-responsive transcription coactivator (Ss18l1) from Rattus norvegicus (Rat).